A 91-amino-acid polypeptide reads, in one-letter code: uncharacterized protein (91 aa).

In terms of domain architecture, Integrase catalytic spans 1 to 91 (MLTFWHWKWL…YQNILRENGI (91 aa)).

This is an uncharacterized protein from Haemophilus influenzae (strain ATCC 51907 / DSM 11121 / KW20 / Rd).